The sequence spans 363 residues: MALYLGVMSGTSLDGLDIALVEQGEQLELLATHYLPMPPDLRQDLLALCSSGPDEIARAALAENRWASLAGEGIRQLLARQGLKPEAVRAIGSHGQTIRHEPARGFTVQIGNPALLAELTGISVVADFRRRDVAAGGQGAPLVPAFHETLFSQLGRRLAILNVGGFSNLSLIEQDKPVHGFDCGPGNVLLDAWIEREHGHPYDADGAWAASGVAQPGLLSALMADPFFAGSGPKSTGREVFNLPWLDRHLANLPAYRAQDVQATLLELTARSIIDSLGKAQQGTEALLVCGGGARNGALMARLGQLLPAARVASTGAYGVDPDWVEAMAFAWLAHCCLEGIAANRPSVTAAKGLRVLGAIYPA.

10 to 17 (GTSLDGLD) lines the ATP pocket.

This sequence belongs to the anhydro-N-acetylmuramic acid kinase family.

It carries out the reaction 1,6-anhydro-N-acetyl-beta-muramate + ATP + H2O = N-acetyl-D-muramate 6-phosphate + ADP + H(+). The protein operates within amino-sugar metabolism; 1,6-anhydro-N-acetylmuramate degradation. Its pathway is cell wall biogenesis; peptidoglycan recycling. Its function is as follows. Catalyzes the specific phosphorylation of 1,6-anhydro-N-acetylmuramic acid (anhMurNAc) with the simultaneous cleavage of the 1,6-anhydro ring, generating MurNAc-6-P. Is required for the utilization of anhMurNAc either imported from the medium or derived from its own cell wall murein, and thus plays a role in cell wall recycling. Contributes to intrinsic fosfomycin resistance in P.putida. This is Anhydro-N-acetylmuramic acid kinase from Pseudomonas putida (strain ATCC 47054 / DSM 6125 / CFBP 8728 / NCIMB 11950 / KT2440).